The sequence spans 194 residues: Large ribosomal subunit protein bL9 (194 aa).

The interval 148-194 (QDEAERQARGENVINSQFEEDRAAEAEAAQDMAEGGAGSFEGDHYEA) is disordered.

The protein belongs to the bacterial ribosomal protein bL9 family.

Functionally, binds to the 23S rRNA. The protein is Large ribosomal subunit protein bL9 of Caulobacter vibrioides (strain ATCC 19089 / CIP 103742 / CB 15) (Caulobacter crescentus).